Reading from the N-terminus, the 515-residue chain is Histidine ammonia-lyase (515 aa).

Positions 148 to 150 form a cross-link, 5-imidazolinone (Ala-Gly); sequence ASG. A 2,3-didehydroalanine (Ser) modification is found at Ser149.

This sequence belongs to the PAL/histidase family. Post-translationally, contains an active site 4-methylidene-imidazol-5-one (MIO), which is formed autocatalytically by cyclization and dehydration of residues Ala-Ser-Gly.

The protein resides in the cytoplasm. It carries out the reaction L-histidine = trans-urocanate + NH4(+). Its pathway is amino-acid degradation; L-histidine degradation into L-glutamate; N-formimidoyl-L-glutamate from L-histidine: step 1/3. This chain is Histidine ammonia-lyase, found in Pseudomonas syringae pv. tomato (strain ATCC BAA-871 / DC3000).